The sequence spans 141 residues: Nucleoside diphosphate kinase (141 aa).

Residues Lys-11, Phe-59, Arg-87, Thr-93, Arg-104, and Asn-114 each coordinate ATP. Catalysis depends on His-117, which acts as the Pros-phosphohistidine intermediate.

This sequence belongs to the NDK family. Homotetramer. It depends on Mg(2+) as a cofactor.

Its subcellular location is the cytoplasm. The enzyme catalyses a 2'-deoxyribonucleoside 5'-diphosphate + ATP = a 2'-deoxyribonucleoside 5'-triphosphate + ADP. It carries out the reaction a ribonucleoside 5'-diphosphate + ATP = a ribonucleoside 5'-triphosphate + ADP. Its function is as follows. Major role in the synthesis of nucleoside triphosphates other than ATP. The ATP gamma phosphate is transferred to the NDP beta phosphate via a ping-pong mechanism, using a phosphorylated active-site intermediate. The polypeptide is Nucleoside diphosphate kinase (Vibrio vulnificus (strain CMCP6)).